A 340-amino-acid polypeptide reads, in one-letter code: Protein-glutamate methylesterase/protein-glutamine glutaminase 1 (340 aa).

One can recognise a Response regulatory domain in the interval 5-122; sequence KLFIVDDSAL…KVVSELKEKI (118 aa). Asp56 is modified (4-aspartylphosphate). The CheB-type methylesterase domain maps to 148 to 340; the sequence is GKNGRQLVVI…AIAEEIAANI (193 aa). Active-site residues include Ser160, His187, and Asp285.

This sequence belongs to the CheB family. In terms of processing, phosphorylated by CheA. Phosphorylation of the N-terminal regulatory domain activates the methylesterase activity.

Its subcellular location is the cytoplasm. The enzyme catalyses [protein]-L-glutamate 5-O-methyl ester + H2O = L-glutamyl-[protein] + methanol + H(+). It catalyses the reaction L-glutaminyl-[protein] + H2O = L-glutamyl-[protein] + NH4(+). Functionally, involved in chemotaxis. Part of a chemotaxis signal transduction system that modulates chemotaxis in response to various stimuli. Catalyzes the demethylation of specific methylglutamate residues introduced into the chemoreceptors (methyl-accepting chemotaxis proteins or MCP) by CheR. Also mediates the irreversible deamidation of specific glutamine residues to glutamic acid. The sequence is that of Protein-glutamate methylesterase/protein-glutamine glutaminase 1 from Carboxydothermus hydrogenoformans (strain ATCC BAA-161 / DSM 6008 / Z-2901).